A 325-amino-acid chain; its full sequence is Lipoyl synthase (325 aa).

Positions 72, 77, 83, 98, 102, 105, and 312 each coordinate [4Fe-4S] cluster. One can recognise a Radical SAM core domain in the interval 84–301; that stretch reads FSSGTATFMI…AEEGMKMGFK (218 aa).

The protein belongs to the radical SAM superfamily. Lipoyl synthase family. It depends on [4Fe-4S] cluster as a cofactor.

It is found in the cytoplasm. The enzyme catalyses [[Fe-S] cluster scaffold protein carrying a second [4Fe-4S](2+) cluster] + N(6)-octanoyl-L-lysyl-[protein] + 2 oxidized [2Fe-2S]-[ferredoxin] + 2 S-adenosyl-L-methionine + 4 H(+) = [[Fe-S] cluster scaffold protein] + N(6)-[(R)-dihydrolipoyl]-L-lysyl-[protein] + 4 Fe(3+) + 2 hydrogen sulfide + 2 5'-deoxyadenosine + 2 L-methionine + 2 reduced [2Fe-2S]-[ferredoxin]. It functions in the pathway protein modification; protein lipoylation via endogenous pathway; protein N(6)-(lipoyl)lysine from octanoyl-[acyl-carrier-protein]: step 2/2. Functionally, catalyzes the radical-mediated insertion of two sulfur atoms into the C-6 and C-8 positions of the octanoyl moiety bound to the lipoyl domains of lipoate-dependent enzymes, thereby converting the octanoylated domains into lipoylated derivatives. The chain is Lipoyl synthase from Stutzerimonas stutzeri (strain A1501) (Pseudomonas stutzeri).